The chain runs to 205 residues: MIGKLRGIVDSTGEDWAVIDVGGVGYHVTCSSRTLRNLPPAGGAVTLSIETKVSDEAIRLIGFTTDSEREWFRLLLAVQGVGTRVALGVLGTLAPADLARAIALDDKKAVSAAPGVGPKVAARIVTELKDKVPDSMGLSAALEVGVNGEAVSSVSAPARDAVSALVNLGYPQAQAMGAVAAAAKRLDDAASTEQLIRHGLKELAR.

Residues 1–64 (MIGKLRGIVD…DEAIRLIGFT (64 aa)) are domain I. The domain II stretch occupies residues 65–143 (TDSEREWFRL…DSMGLSAALE (79 aa)). The interval 144-152 (VGVNGEAVS) is flexible linker. Residues 153–205 (SVSAPARDAVSALVNLGYPQAQAMGAVAAAAKRLDDAASTEQLIRHGLKELAR) are domain III.

Belongs to the RuvA family. As to quaternary structure, homotetramer. Forms an RuvA(8)-RuvB(12)-Holliday junction (HJ) complex. HJ DNA is sandwiched between 2 RuvA tetramers; dsDNA enters through RuvA and exits via RuvB. An RuvB hexamer assembles on each DNA strand where it exits the tetramer. Each RuvB hexamer is contacted by two RuvA subunits (via domain III) on 2 adjacent RuvB subunits; this complex drives branch migration. In the full resolvosome a probable DNA-RuvA(4)-RuvB(12)-RuvC(2) complex forms which resolves the HJ.

Its subcellular location is the cytoplasm. The RuvA-RuvB-RuvC complex processes Holliday junction (HJ) DNA during genetic recombination and DNA repair, while the RuvA-RuvB complex plays an important role in the rescue of blocked DNA replication forks via replication fork reversal (RFR). RuvA specifically binds to HJ cruciform DNA, conferring on it an open structure. The RuvB hexamer acts as an ATP-dependent pump, pulling dsDNA into and through the RuvAB complex. HJ branch migration allows RuvC to scan DNA until it finds its consensus sequence, where it cleaves and resolves the cruciform DNA. In Parvibaculum lavamentivorans (strain DS-1 / DSM 13023 / NCIMB 13966), this protein is Holliday junction branch migration complex subunit RuvA.